The sequence spans 189 residues: Adenylate kinase (189 aa).

10 to 15 (AAGKGT) serves as a coordination point for ATP. The tract at residues 30 to 59 (STGDMLRAAIASGSELGQKVKGVLDRGELV) is NMP. Residues Thr31, Arg36, 57–59 (ELV), 85–88 (GFPR), and Gln92 each bind AMP. Positions 126-136 (KRFAEQGRPDD) are LID. Arg127 provides a ligand contact to ATP. 2 residues coordinate AMP: Arg133 and Arg144. An ATP-binding site is contributed by Ala172.

This sequence belongs to the adenylate kinase family. As to quaternary structure, monomer.

It localises to the cytoplasm. The catalysed reaction is AMP + ATP = 2 ADP. It functions in the pathway purine metabolism; AMP biosynthesis via salvage pathway; AMP from ADP: step 1/1. Functionally, catalyzes the reversible transfer of the terminal phosphate group between ATP and AMP. Plays an important role in cellular energy homeostasis and in adenine nucleotide metabolism. This is Adenylate kinase from Caulobacter sp. (strain K31).